The chain runs to 555 residues: Dihydroxy-acid dehydratase (555 aa).

Aspartate 78 contacts Mg(2+). Cysteine 119 is a binding site for [2Fe-2S] cluster. Positions 120 and 121 each coordinate Mg(2+). Lysine 121 carries the post-translational modification N6-carboxylysine. Cysteine 191 provides a ligand contact to [2Fe-2S] cluster. Glutamate 444 lines the Mg(2+) pocket. The active-site Proton acceptor is serine 470.

Belongs to the IlvD/Edd family. In terms of assembly, homodimer. [2Fe-2S] cluster serves as cofactor. Requires Mg(2+) as cofactor.

It carries out the reaction (2R)-2,3-dihydroxy-3-methylbutanoate = 3-methyl-2-oxobutanoate + H2O. It catalyses the reaction (2R,3R)-2,3-dihydroxy-3-methylpentanoate = (S)-3-methyl-2-oxopentanoate + H2O. It participates in amino-acid biosynthesis; L-isoleucine biosynthesis; L-isoleucine from 2-oxobutanoate: step 3/4. The protein operates within amino-acid biosynthesis; L-valine biosynthesis; L-valine from pyruvate: step 3/4. Its function is as follows. Functions in the biosynthesis of branched-chain amino acids. Catalyzes the dehydration of (2R,3R)-2,3-dihydroxy-3-methylpentanoate (2,3-dihydroxy-3-methylvalerate) into 2-oxo-3-methylpentanoate (2-oxo-3-methylvalerate) and of (2R)-2,3-dihydroxy-3-methylbutanoate (2,3-dihydroxyisovalerate) into 2-oxo-3-methylbutanoate (2-oxoisovalerate), the penultimate precursor to L-isoleucine and L-valine, respectively. This chain is Dihydroxy-acid dehydratase, found in Maridesulfovibrio salexigens (strain ATCC 14822 / DSM 2638 / NCIMB 8403 / VKM B-1763) (Desulfovibrio salexigens).